The chain runs to 399 residues: Nicotinate phosphoribosyltransferase (399 aa).

His-217 carries the post-translational modification Phosphohistidine; by autocatalysis.

Belongs to the NAPRTase family. In terms of processing, transiently phosphorylated on a His residue during the reaction cycle. Phosphorylation strongly increases the affinity for substrates and increases the rate of nicotinate D-ribonucleotide production. Dephosphorylation regenerates the low-affinity form of the enzyme, leading to product release.

The catalysed reaction is nicotinate + 5-phospho-alpha-D-ribose 1-diphosphate + ATP + H2O = nicotinate beta-D-ribonucleotide + ADP + phosphate + diphosphate. The protein operates within cofactor biosynthesis; NAD(+) biosynthesis; nicotinate D-ribonucleotide from nicotinate: step 1/1. Catalyzes the synthesis of beta-nicotinate D-ribonucleotide from nicotinate and 5-phospho-D-ribose 1-phosphate at the expense of ATP. The sequence is that of Nicotinate phosphoribosyltransferase from Burkholderia cenocepacia (strain HI2424).